The sequence spans 149 residues: UPF0179 protein MA_3685 (149 aa).

This sequence belongs to the UPF0179 family.

This chain is UPF0179 protein MA_3685, found in Methanosarcina acetivorans (strain ATCC 35395 / DSM 2834 / JCM 12185 / C2A).